The chain runs to 77 residues: Omega-conotoxin-like SO-5 (77 aa).

An N-terminal signal peptide occupies residues 1–22 (MKLTCVMIVAVLLLTACQLITA). The propeptide occupies 23–42 (DDSRGTQKHRSLRSTTKVSK). 3 disulfide bridges follow: Cys-46/Cys-61, Cys-53/Cys-64, and Cys-60/Cys-71.

It belongs to the conotoxin O1 superfamily. As to expression, expressed by the venom duct.

It is found in the secreted. Omega-conotoxins act at presynaptic membranes, they bind and block voltage-gated calcium channels (Cav). In Conus striatus (Striated cone), this protein is Omega-conotoxin-like SO-5 (SO5).